Reading from the N-terminus, the 160-residue chain is Putative flagellin YvzB (160 aa).

This sequence belongs to the bacterial flagellin family. Interacts with FliW.

It localises to the bacterial flagellum. The protein is Putative flagellin YvzB (yvzB) of Bacillus subtilis (strain 168).